Consider the following 182-residue polypeptide: Large ribosomal subunit protein uL6 (182 aa).

Belongs to the universal ribosomal protein uL6 family. In terms of assembly, part of the 50S ribosomal subunit.

In terms of biological role, this protein binds to the 23S rRNA, and is important in its secondary structure. It is located near the subunit interface in the base of the L7/L12 stalk, and near the tRNA binding site of the peptidyltransferase center. The sequence is that of Large ribosomal subunit protein uL6 from Karelsulcia muelleri (strain GWSS) (Sulcia muelleri).